We begin with the raw amino-acid sequence, 719 residues long: Probable 1-deoxy-D-xylulose-5-phosphate synthase, chloroplastic (719 aa).

A chloroplast-targeting transit peptide spans methionine 1–glutamine 57. Thiamine diphosphate is bound by residues histidine 145 and glycine 186–serine 188. Mg(2+) is bound at residue aspartate 217. Residues glycine 218 to alanine 219, asparagine 246, tyrosine 367, and glutamate 449 contribute to the thiamine diphosphate site. Residue asparagine 246 participates in Mg(2+) binding.

This sequence belongs to the transketolase family. DXPS subfamily. In terms of assembly, homodimer. The cofactor is Mg(2+). Thiamine diphosphate is required as a cofactor.

The protein resides in the plastid. It is found in the chloroplast. It carries out the reaction D-glyceraldehyde 3-phosphate + pyruvate + H(+) = 1-deoxy-D-xylulose 5-phosphate + CO2. The protein operates within metabolic intermediate biosynthesis; 1-deoxy-D-xylulose 5-phosphate biosynthesis; 1-deoxy-D-xylulose 5-phosphate from D-glyceraldehyde 3-phosphate and pyruvate: step 1/1. In terms of biological role, catalyzes the acyloin condensation reaction between C atoms 2 and 3 of pyruvate and glyceraldehyde 3-phosphate to yield 1-deoxy-D-xylulose-5-phosphate (DXP). In Capsicum annuum (Capsicum pepper), this protein is Probable 1-deoxy-D-xylulose-5-phosphate synthase, chloroplastic (TKT2).